We begin with the raw amino-acid sequence, 238 residues long: Small ribosomal subunit protein uS3 (238 aa).

Residues 39-107 enclose the KH type-2 domain; sequence MREFIHDYAK…ELHLNIVEIR (69 aa). The segment covering 212 to 222 has biased composition (basic and acidic residues); sequence PQAHDRRHSEA. Residues 212–238 are disordered; sequence PQAHDRRHSEAQEGAAPRPPRRDRERA.

It belongs to the universal ribosomal protein uS3 family. As to quaternary structure, part of the 30S ribosomal subunit. Forms a tight complex with proteins S10 and S14.

In terms of biological role, binds the lower part of the 30S subunit head. Binds mRNA in the 70S ribosome, positioning it for translation. This Cereibacter sphaeroides (strain ATCC 17029 / ATH 2.4.9) (Rhodobacter sphaeroides) protein is Small ribosomal subunit protein uS3.